The primary structure comprises 213 residues: uncharacterized protein (213 aa).

Active-site charge relay system residues include Ser114, Asp162, and His194.

It belongs to the AB hydrolase superfamily. AB hydrolase 2 family.

This is an uncharacterized protein from Rickettsia bellii (strain RML369-C).